The following is a 182-amino-acid chain: Peptidyl-tRNA hydrolase (182 aa).

Residue tyrosine 14 participates in tRNA binding. The active-site Proton acceptor is histidine 19. TRNA contacts are provided by phenylalanine 64, asparagine 66, and asparagine 112.

The protein belongs to the PTH family. As to quaternary structure, monomer.

Its subcellular location is the cytoplasm. The catalysed reaction is an N-acyl-L-alpha-aminoacyl-tRNA + H2O = an N-acyl-L-amino acid + a tRNA + H(+). Its function is as follows. Hydrolyzes ribosome-free peptidyl-tRNAs (with 1 or more amino acids incorporated), which drop off the ribosome during protein synthesis, or as a result of ribosome stalling. In terms of biological role, catalyzes the release of premature peptidyl moieties from peptidyl-tRNA molecules trapped in stalled 50S ribosomal subunits, and thus maintains levels of free tRNAs and 50S ribosomes. The polypeptide is Peptidyl-tRNA hydrolase (Wolbachia sp. subsp. Brugia malayi (strain TRS)).